A 234-amino-acid chain; its full sequence is Opacity protein V28 (234 aa).

A signal peptide is located at residue Ala-1.

Belongs to the opacity porin family.

The protein localises to the cell outer membrane. Its function is as follows. Implicated in a number of adherence functions. OPA proteins are implicated in pathogenesis and are subject to phase variation. The sequence is that of Opacity protein V28 from Neisseria gonorrhoeae.